We begin with the raw amino-acid sequence, 75 residues long: Dermaseptin-A3 (75 aa).

An N-terminal signal peptide occupies residues 1-22; sequence MAFLKKSLFLVLLLGLISLSIC. Positions 23 to 43 are excised as a propeptide; sequence EEEKRENEVEEEQEDDEQSEL. Glutamine 72 is subject to Glutamine amide. Residues 74–75 constitute a propeptide that is removed on maturation; sequence EQ.

The protein belongs to the frog skin active peptide (FSAP) family. Dermaseptin subfamily. In terms of tissue distribution, expressed by the skin glands.

It is found in the secreted. Functionally, possesses a potent antimicrobial activity against Gram-positive and Gram-negative bacteria. Probably acts by disturbing membrane functions with its amphipathic structure. The polypeptide is Dermaseptin-A3 (Agalychnis annae (Blue-sided leaf frog)).